The primary structure comprises 446 residues: NADH-ubiquinone oxidoreductase chain 4 (446 aa).

13 helical membrane passes run 4–24 (IILFLLFLTPVCFINNMYWMV), 56–76 (MLSYGLVLLSLWICSLMLLAS), 93–113 (IVILLLLLVLTFSSMSLFMFY), 114–134 (LFFESSLIPTLFLILGWGYQP), 141–161 (VYLLFYTLLVSLPMLIGIFYV), 182–202 (LLYFCLLCAFLVKMPMFLVHL), 212–232 (PVSGSMILAGIMLKLGGYGLL), 245–265 (YSFVWISISLVGGVLMSLVCL), 272–292 (ALIAYSSVAHMGIVLAGLLTM), 297–317 (LCGSYTLMIAHGLCSSGLFCL), 330–350 (MLINKGLLNFMPAMTLWWFLL), 373–393 (IVSWSWISMIMLSFLSFFSAA), and 426–446 (LLHWLPLNLLILKSESCILWL).

It belongs to the complex I subunit 4 family.

It is found in the mitochondrion membrane. It catalyses the reaction a ubiquinone + NADH + 5 H(+)(in) = a ubiquinol + NAD(+) + 4 H(+)(out). Functionally, core subunit of the mitochondrial membrane respiratory chain NADH dehydrogenase (Complex I) that is believed to belong to the minimal assembly required for catalysis. Complex I functions in the transfer of electrons from NADH to the respiratory chain. The immediate electron acceptor for the enzyme is believed to be ubiquinone. The chain is NADH-ubiquinone oxidoreductase chain 4 (mt:ND4) from Drosophila yakuba (Fruit fly).